Here is a 280-residue protein sequence, read N- to C-terminus: Large ribosomal subunit protein uL2 (280 aa).

Disordered regions lie at residues 27 to 58 (STPE…GGGH) and 226 to 280 (MNPV…KHGR). 2 stretches are compositionally biased toward basic residues: residues 37 to 58 (LHGH…GGGH) and 268 to 280 (IVRR…KHGR).

The protein belongs to the universal ribosomal protein uL2 family. In terms of assembly, part of the 50S ribosomal subunit. Forms a bridge to the 30S subunit in the 70S ribosome.

Its function is as follows. One of the primary rRNA binding proteins. Required for association of the 30S and 50S subunits to form the 70S ribosome, for tRNA binding and peptide bond formation. It has been suggested to have peptidyltransferase activity; this is somewhat controversial. Makes several contacts with the 16S rRNA in the 70S ribosome. In Mycobacterium marinum (strain ATCC BAA-535 / M), this protein is Large ribosomal subunit protein uL2.